The chain runs to 148 residues: F-box protein At3g55900 (148 aa).

An F-box domain is found at 9–59 (CRNLSELPQELLYKILGLLPTRNVVSTSLISHQRRSQFHWMERLKFRYPRL).

This is F-box protein At3g55900 from Arabidopsis thaliana (Mouse-ear cress).